The sequence spans 382 residues: Anhydro-N-acetylmuramic acid kinase (382 aa).

Residue 9 to 16 (GTSLDGID) coordinates ATP.

This sequence belongs to the anhydro-N-acetylmuramic acid kinase family.

It carries out the reaction 1,6-anhydro-N-acetyl-beta-muramate + ATP + H2O = N-acetyl-D-muramate 6-phosphate + ADP + H(+). The protein operates within amino-sugar metabolism; 1,6-anhydro-N-acetylmuramate degradation. Its pathway is cell wall biogenesis; peptidoglycan recycling. Its function is as follows. Catalyzes the specific phosphorylation of 1,6-anhydro-N-acetylmuramic acid (anhMurNAc) with the simultaneous cleavage of the 1,6-anhydro ring, generating MurNAc-6-P. Is required for the utilization of anhMurNAc either imported from the medium or derived from its own cell wall murein, and thus plays a role in cell wall recycling. This is Anhydro-N-acetylmuramic acid kinase from Bacillus cereus (strain ZK / E33L).